A 309-amino-acid polypeptide reads, in one-letter code: Probable manganese-dependent inorganic pyrophosphatase (309 aa).

Residues histidine 9, aspartate 13, aspartate 15, aspartate 75, histidine 97, and aspartate 149 each contribute to the Mn(2+) site.

Belongs to the PPase class C family. Mn(2+) is required as a cofactor.

It localises to the cytoplasm. The catalysed reaction is diphosphate + H2O = 2 phosphate + H(+). The polypeptide is Probable manganese-dependent inorganic pyrophosphatase (Staphylococcus epidermidis (strain ATCC 35984 / DSM 28319 / BCRC 17069 / CCUG 31568 / BM 3577 / RP62A)).